The following is a 310-amino-acid chain: Methionyl-tRNA formyltransferase (310 aa).

Position 112–115 (112–115) interacts with (6S)-5,6,7,8-tetrahydrofolate; sequence SLLP.

The protein belongs to the Fmt family.

The enzyme catalyses L-methionyl-tRNA(fMet) + (6R)-10-formyltetrahydrofolate = N-formyl-L-methionyl-tRNA(fMet) + (6S)-5,6,7,8-tetrahydrofolate + H(+). In terms of biological role, attaches a formyl group to the free amino group of methionyl-tRNA(fMet). The formyl group appears to play a dual role in the initiator identity of N-formylmethionyl-tRNA by promoting its recognition by IF2 and preventing the misappropriation of this tRNA by the elongation apparatus. This is Methionyl-tRNA formyltransferase from Pelagibacter ubique (strain HTCC1062).